Here is a 214-residue protein sequence, read N- to C-terminus: Octanoyltransferase (214 aa).

A BPL/LPL catalytic domain is found at 28 to 203 (GSGAETLLLL…RFEGFLDEFM (176 aa)). Substrate is bound by residues 66-73 (RGGDVTYH), 133-135 (SIG), and 146-148 (GFA). Cysteine 164 functions as the Acyl-thioester intermediate in the catalytic mechanism.

Belongs to the LipB family.

It localises to the cytoplasm. The enzyme catalyses octanoyl-[ACP] + L-lysyl-[protein] = N(6)-octanoyl-L-lysyl-[protein] + holo-[ACP] + H(+). Its pathway is protein modification; protein lipoylation via endogenous pathway; protein N(6)-(lipoyl)lysine from octanoyl-[acyl-carrier-protein]: step 1/2. In terms of biological role, catalyzes the transfer of endogenously produced octanoic acid from octanoyl-acyl-carrier-protein onto the lipoyl domains of lipoate-dependent enzymes. Lipoyl-ACP can also act as a substrate although octanoyl-ACP is likely to be the physiological substrate. The chain is Octanoyltransferase from Geotalea uraniireducens (strain Rf4) (Geobacter uraniireducens).